Here is a 534-residue protein sequence, read N- to C-terminus: GPI transamidase component GPI17 (534 aa).

Residues Met1–Lys8 lie on the Cytoplasmic side of the membrane. A helical transmembrane segment spans residues Trp9–Leu29. Residues Thr30 to His472 are Lumenal-facing. Residues Asn100, Asn170, Asn228, Asn247, and Asn299 are each glycosylated (N-linked (GlcNAc...) asparagine). A helical membrane pass occupies residues Met473–Tyr493. Residues Asn494–Leu534 are Cytoplasmic-facing.

It belongs to the PIGS family. As to quaternary structure, forms a complex with CDC91, GPI16, GPI8 and GAA1. Post-translationally, N-glycosylated.

It is found in the endoplasmic reticulum membrane. It functions in the pathway glycolipid biosynthesis; glycosylphosphatidylinositol-anchor biosynthesis. Its function is as follows. Component of the GPI transamidase complex. Involved in transfer of GPI to proteins. In Saccharomyces cerevisiae (strain ATCC 204508 / S288c) (Baker's yeast), this protein is GPI transamidase component GPI17 (GPI17).